Here is a 319-residue protein sequence, read N- to C-terminus: Putative metal ion transporter YfjQ (319 aa).

2 helical membrane passes run 254 to 274 (IMMT…IAGV) and 290 to 310 (GYFA…IWFV).

It belongs to the CorA metal ion transporter (MIT) (TC 1.A.35) family.

It is found in the cell membrane. This chain is Putative metal ion transporter YfjQ (yfjQ), found in Bacillus subtilis (strain 168).